We begin with the raw amino-acid sequence, 478 residues long: Cytochrome c-552 (478 aa).

The signal sequence occupies residues 1 to 26 (MARKTLRARRFFSLIFPFFFITSVYA). H94 contributes to the heme c binding site. The heme site is built by C122, C125, and K126. Heme c-binding residues include C160, C163, H164, C209, C212, and H213. Ca(2+) contacts are provided by E215, Y216, K261, and Q263. Substrate is bound at residue Y216. Position 264 (H264) interacts with substrate. Residues H275, C282, C285, H286, H301, C314, C317, H318, and H393 each contribute to the heme c site.

This sequence belongs to the cytochrome c-552 family. The cofactor is Ca(2+). Heme c serves as cofactor.

The protein localises to the periplasm. The enzyme catalyses 6 Fe(III)-[cytochrome c] + NH4(+) + 2 H2O = 6 Fe(II)-[cytochrome c] + nitrite + 8 H(+). The protein operates within nitrogen metabolism; nitrate reduction (assimilation). Catalyzes the reduction of nitrite to ammonia, consuming six electrons in the process. In Salmonella gallinarum (strain 287/91 / NCTC 13346), this protein is Cytochrome c-552.